The primary structure comprises 420 residues: Tyrosine-protein phosphatase non-receptor type 20 (420 aa).

Over residues Met1–Pro11 the composition is skewed to basic and acidic residues. Disordered stretches follow at residues Met1–Asn47 and Asp68–Leu108. Polar residues predominate over residues Leu31–Arg41. Ser76 and Ser120 each carry phosphoserine. A Tyrosine-protein phosphatase domain is found at Ile159–Val412. Substrate contacts are provided by residues Asp323, Cys353–Arg359, and Gln397. Cys353 (phosphocysteine intermediate) is an active-site residue.

Belongs to the protein-tyrosine phosphatase family. Non-receptor class subfamily. As to expression, present in many cell lines (at protein level). Widely expressed.

Its subcellular location is the nucleus. The protein localises to the cytoplasm. It localises to the cytoskeleton. The protein resides in the microtubule organizing center. It is found in the centrosome. It catalyses the reaction O-phospho-L-tyrosyl-[protein] + H2O = L-tyrosyl-[protein] + phosphate. Functionally, tyrosine-protein phosphatase targeted to sites of actin polymerization in response of varied extracellular stimuli. Has tyrosine phosphatase activity towards various tyrosyl phosphorylated substrates. This is Tyrosine-protein phosphatase non-receptor type 20 from Homo sapiens (Human).